A 163-amino-acid polypeptide reads, in one-letter code: Transcriptional repressor NrdR (163 aa).

Residues Cys3–Cys34 fold into a zinc finger. One can recognise an ATP-cone domain in the interval Leu46–Asp136.

Belongs to the NrdR family. The cofactor is Zn(2+).

Functionally, negatively regulates transcription of bacterial ribonucleotide reductase nrd genes and operons by binding to NrdR-boxes. The protein is Transcriptional repressor NrdR of Renibacterium salmoninarum (strain ATCC 33209 / DSM 20767 / JCM 11484 / NBRC 15589 / NCIMB 2235).